A 225-amino-acid chain; its full sequence is Uridylate kinase (225 aa).

9–10 (GS) serves as a coordination point for ATP. Gly46 contributes to the UMP binding site. Residues Gly47 and Arg51 each coordinate ATP. UMP is bound by residues Asp67 and 115–121 (THPAHTT). Thr141, Asn142, Tyr147, and Asp150 together coordinate ATP.

The protein belongs to the UMP kinase family. As to quaternary structure, homohexamer.

The protein localises to the cytoplasm. It catalyses the reaction UMP + ATP = UDP + ADP. It functions in the pathway pyrimidine metabolism; CTP biosynthesis via de novo pathway; UDP from UMP (UMPK route): step 1/1. With respect to regulation, inhibited by UTP. Functionally, catalyzes the reversible phosphorylation of UMP to UDP. The sequence is that of Uridylate kinase from Methanococcus vannielii (strain ATCC 35089 / DSM 1224 / JCM 13029 / OCM 148 / SB).